The primary structure comprises 362 residues: Melatonin receptor type 1B (362 aa).

The Extracellular segment spans residues 1–42; it reads MSENGSFANCCEAGGWAVRPGWSGAGSARPSRTPRPPWVAPA. N-linked (GlcNAc...) asparagine glycosylation is present at Asn-4. Residues 43-63 form a helical membrane-spanning segment; it reads LSAVLIVTTAVDVVGNLLVIL. At 64-76 the chain is on the cytoplasmic side; that stretch reads SVLRNRKLRNAGN. The chain crosses the membrane as a helical span at residues 77–97; the sequence is LFLVSLALADLVVAFYPYPLI. Residues 98 to 115 lie on the Extracellular side of the membrane; it reads LVAIFYDGWALGEEHCKA. Cys-113 and Cys-190 are disulfide-bonded. The helical transmembrane segment at 116–136 threads the bilayer; sequence SAFVMGLSVIGSVFNITAIAI. The Cytoplasmic segment spans residues 137–155; sequence NRYCYICHSMAYHRIYRRW. A helical transmembrane segment spans residues 156-176; sequence HTPLHICLIWLLTVVALLPNF. Residues Asn-175 and Gln-194 each contribute to the melatonin site. The Extracellular segment spans residues 177 to 200; sequence FVGSLEYDPRIYSCTFIQTASTQY. The chain crosses the membrane as a helical span at residues 201-221; that stretch reads TAAVVVIHFLLPIAVVSFCYL. The Cytoplasmic portion of the chain corresponds to 222–253; that stretch reads RIWVLVLQARRKAKPESRLCLKPSDLRSFLTM. Residues 254 to 274 traverse the membrane as a helical segment; that stretch reads FVVFVIFAICWAPLNCIGLAV. The Extracellular segment spans residues 275–287; the sequence is AINPQEMAPQIPE. Residues 288-308 form a helical membrane-spanning segment; the sequence is GLFVTSYLLAYFNSCLNAIVY. The Cytoplasmic portion of the chain corresponds to 309–362; it reads GLLNQNFRREYKRILLALWNPRHCIQDASKGSHAEGLQSPAPPIIGVQHQADAL.

The protein belongs to the G-protein coupled receptor 1 family. Interacts with GPR61, GPR62 and GPR135. As to expression, expressed in retina and less in brain and hippocampus.

Its subcellular location is the cell membrane. In terms of biological role, high affinity receptor for melatonin. Likely to mediate the reproductive and circadian actions of melatonin. The activity of this receptor is mediated by pertussis toxin sensitive G proteins that inhibit adenylate cyclase activity. In Homo sapiens (Human), this protein is Melatonin receptor type 1B (MTNR1B).